The sequence spans 329 residues: Ketol-acid reductoisomerase (NADP(+)) (329 aa).

The KARI N-terminal Rossmann domain maps to 2–182 (TQLFYDTDAD…GGTRAGILET (181 aa)). NADP(+)-binding positions include 25-28 (YGSQ), serine 51, serine 53, and 83-86 (DEFQ). Residue histidine 108 is part of the active site. An NADP(+)-binding site is contributed by glycine 134. Positions 183–328 (NFKEETETDL…KGLRAMFSWL (146 aa)) constitute a KARI C-terminal knotted domain. Residues aspartate 191, glutamate 195, glutamate 227, and glutamate 231 each coordinate Mg(2+). Serine 252 is a substrate binding site.

The protein belongs to the ketol-acid reductoisomerase family. Mg(2+) serves as cofactor.

It carries out the reaction (2R)-2,3-dihydroxy-3-methylbutanoate + NADP(+) = (2S)-2-acetolactate + NADPH + H(+). The enzyme catalyses (2R,3R)-2,3-dihydroxy-3-methylpentanoate + NADP(+) = (S)-2-ethyl-2-hydroxy-3-oxobutanoate + NADPH + H(+). Its pathway is amino-acid biosynthesis; L-isoleucine biosynthesis; L-isoleucine from 2-oxobutanoate: step 2/4. It participates in amino-acid biosynthesis; L-valine biosynthesis; L-valine from pyruvate: step 2/4. Functionally, involved in the biosynthesis of branched-chain amino acids (BCAA). Catalyzes an alkyl-migration followed by a ketol-acid reduction of (S)-2-acetolactate (S2AL) to yield (R)-2,3-dihydroxy-isovalerate. In the isomerase reaction, S2AL is rearranged via a Mg-dependent methyl migration to produce 3-hydroxy-3-methyl-2-ketobutyrate (HMKB). In the reductase reaction, this 2-ketoacid undergoes a metal-dependent reduction by NADPH to yield (R)-2,3-dihydroxy-isovalerate. This chain is Ketol-acid reductoisomerase (NADP(+)), found in Prochlorococcus marinus (strain MIT 9515).